A 213-amino-acid chain; its full sequence is Orotate phosphoribosyltransferase (213 aa).

Residue K26 participates in 5-phospho-alpha-D-ribose 1-diphosphate binding. 34–35 (FF) lines the orotate pocket. 5-phospho-alpha-D-ribose 1-diphosphate is bound by residues 72 to 73 (YK), R99, K100, K103, H105, and 124 to 132 (DDVITAGTA). Orotate-binding residues include T128 and R156.

The protein belongs to the purine/pyrimidine phosphoribosyltransferase family. PyrE subfamily. In terms of assembly, homodimer. Requires Mg(2+) as cofactor.

The enzyme catalyses orotidine 5'-phosphate + diphosphate = orotate + 5-phospho-alpha-D-ribose 1-diphosphate. It functions in the pathway pyrimidine metabolism; UMP biosynthesis via de novo pathway; UMP from orotate: step 1/2. Functionally, catalyzes the transfer of a ribosyl phosphate group from 5-phosphoribose 1-diphosphate to orotate, leading to the formation of orotidine monophosphate (OMP). This chain is Orotate phosphoribosyltransferase, found in Aliivibrio fischeri (strain MJ11) (Vibrio fischeri).